Consider the following 268-residue polypeptide: GTP cyclohydrolase FolE2 (268 aa).

This sequence belongs to the GTP cyclohydrolase IV family.

It catalyses the reaction GTP + H2O = 7,8-dihydroneopterin 3'-triphosphate + formate + H(+). It participates in cofactor biosynthesis; 7,8-dihydroneopterin triphosphate biosynthesis; 7,8-dihydroneopterin triphosphate from GTP: step 1/1. Functionally, converts GTP to 7,8-dihydroneopterin triphosphate. The polypeptide is GTP cyclohydrolase FolE2 (Janthinobacterium sp. (strain Marseille) (Minibacterium massiliensis)).